We begin with the raw amino-acid sequence, 229 residues long: MATELTWHDVLADEKQQPYFINTLHTVAGERQSGITVYPPQKDVFNAFRFTELGDVKVVILGQDPYHGPGQAHGLAFSVRPGIAPPPSLVNMYKELEASIPGFVRPAHGYLESWARQGVLLLNTVLTVRAGQAHSHASLGWETFTDKVISLINQHREGVVFLLWGSHAQKKGAIIDPQRHHILKAPHPSPLSAHRGFFGCNHFALTNQWLEQHGEKTIDWTPVLPAESE.

D64 acts as the Proton acceptor in catalysis.

Belongs to the uracil-DNA glycosylase (UDG) superfamily. UNG family.

It localises to the cytoplasm. It carries out the reaction Hydrolyzes single-stranded DNA or mismatched double-stranded DNA and polynucleotides, releasing free uracil.. Functionally, excises uracil residues from the DNA which can arise as a result of misincorporation of dUMP residues by DNA polymerase or due to deamination of cytosine. This is Uracil-DNA glycosylase from Salmonella choleraesuis (strain SC-B67).